We begin with the raw amino-acid sequence, 543 residues long: MARYIFITGGVVSSLGKGLASAALGALLQARGYKVRLRKLDPYLNLDPGTMSPYQHGEVFVTDDGAETDLDLGHYERFTGRPATKADNITTGRIYQDILTKERRGDYLGATIQVVPHVTNAIKDFVLSGNDEYDFVLVEIGGTVGDIEGLPFFEAIRQLKNELPRDHAIYIHLTLLPYIPSAGELKTKPTQHSVKELRSIGIQPDILLCRTDREIPKEERRKLGLFCNVRESAVIEARDVDNIYAVPEAYHAAGLDDEVLAAFGIEPRVPPALASWHTINERVRNPEGDVTIAIVGKYTGMKDAYKSLIEALSHGGIANKVRVKLDWIESEVFENEDPAPFLEHVNGILVPGGFGQRGAEGKIRAAQFARERDVPYFGICFGMQMAVIEAARNLVGITEANSTEFGPTKEPLVGLMTEWLRGNELERRSQSGDLGGTMRLGAYPAMLKRGSRVSEVYGGATEISERHRHRYEVNTAYKDRLEQHGLKFSGLSPDGVLPEIVEYADHPWFIGVQFHPELKSRPFEPHPLFASFIQAAVVQSRLV.

The amidoligase domain stretch occupies residues 1 to 265 (MARYIFITGG…DDEVLAAFGI (265 aa)). Ser13 contributes to the CTP binding site. Ser13 is a binding site for UTP. 14 to 19 (SLGKGL) lines the ATP pocket. Tyr54 contributes to the L-glutamine binding site. Asp71 is a binding site for ATP. The Mg(2+) site is built by Asp71 and Glu139. Residues 146 to 148 (DIE), 186 to 191 (KTKPTQ), and Lys222 each bind CTP. UTP-binding positions include 186–191 (KTKPTQ) and Lys222. 238 to 240 (RDV) lines the ATP pocket. The region spanning 291 to 542 (TIAIVGKYTG…IQAAVVQSRL (252 aa)) is the Glutamine amidotransferase type-1 domain. Gly353 provides a ligand contact to L-glutamine. Cys380 (nucleophile; for glutamine hydrolysis) is an active-site residue. L-glutamine-binding positions include 381–384 (FGMQ), Glu404, and Arg470. Active-site residues include His515 and Glu517.

Belongs to the CTP synthase family. Homotetramer.

The enzyme catalyses UTP + L-glutamine + ATP + H2O = CTP + L-glutamate + ADP + phosphate + 2 H(+). It catalyses the reaction L-glutamine + H2O = L-glutamate + NH4(+). The catalysed reaction is UTP + NH4(+) + ATP = CTP + ADP + phosphate + 2 H(+). The protein operates within pyrimidine metabolism; CTP biosynthesis via de novo pathway; CTP from UDP: step 2/2. Allosterically activated by GTP, when glutamine is the substrate; GTP has no effect on the reaction when ammonia is the substrate. The allosteric effector GTP functions by stabilizing the protein conformation that binds the tetrahedral intermediate(s) formed during glutamine hydrolysis. Inhibited by the product CTP, via allosteric rather than competitive inhibition. Catalyzes the ATP-dependent amination of UTP to CTP with either L-glutamine or ammonia as the source of nitrogen. Regulates intracellular CTP levels through interactions with the four ribonucleotide triphosphates. The polypeptide is CTP synthase (Bradyrhizobium sp. (strain BTAi1 / ATCC BAA-1182)).